Consider the following 185-residue polypeptide: Elongation factor P (185 aa).

Belongs to the elongation factor P family.

Its subcellular location is the cytoplasm. It functions in the pathway protein biosynthesis; polypeptide chain elongation. Involved in peptide bond synthesis. Stimulates efficient translation and peptide-bond synthesis on native or reconstituted 70S ribosomes in vitro. Probably functions indirectly by altering the affinity of the ribosome for aminoacyl-tRNA, thus increasing their reactivity as acceptors for peptidyl transferase. In Staphylococcus aureus (strain Mu3 / ATCC 700698), this protein is Elongation factor P.